The following is a 515-amino-acid chain: Iridoid oxidase (515 aa).

2 helical membrane passes run 8-28 (SLNP…IIFV) and 180-200 (AVQL…NLML). Cys455 lines the heme pocket.

This sequence belongs to the cytochrome P450 family. Expressed in the leaf internal phloem-associated parenchyma (IPAP) inside the mesophyll.

The protein resides in the endoplasmic reticulum membrane. The catalysed reaction is (+)-cis-trans-nepetalactol + 3 reduced [NADPH--hemoprotein reductase] + 3 O2 = 7-deoxyloganetate + 3 oxidized [NADPH--hemoprotein reductase] + 4 H2O + 4 H(+). The protein operates within alkaloid biosynthesis. Component of the seco-iridoid and derivatives monoterpenoid indole alkaloids (MIAs, e.g. vincristine, quinine, and strychnine) biosynthesis pathway. Catalyzes the conversion of cis-trans-nepetalactol (iridodial) into 7-deoxyloganetic acid. Also converts iridotrial into 7-deoxyloganetic acid. The polypeptide is Iridoid oxidase (Catharanthus roseus (Madagascar periwinkle)).